The chain runs to 87 residues: Small ribosomal subunit protein uS17 (87 aa).

It belongs to the universal ribosomal protein uS17 family. As to quaternary structure, part of the 30S ribosomal subunit.

One of the primary rRNA binding proteins, it binds specifically to the 5'-end of 16S ribosomal RNA. The chain is Small ribosomal subunit protein uS17 from Onion yellows phytoplasma (strain OY-M).